A 199-amino-acid chain; its full sequence is Ribonuclease P protein subunit p25 (199 aa).

Over residues 1 to 11 (MENFRKVRSEE) the composition is skewed to basic and acidic residues. Disordered stretches follow at residues 1–31 (MENF…FADL) and 146–199 (PRQL…DRTA). Ser-172 carries the phosphoserine modification. Residues 190 to 199 (PEAENEDRTA) show a composition bias toward acidic residues.

Belongs to the histone-like Alba family. Component of nuclear RNase P and RNase MRP ribonucleoproteins. RNase P consists of a catalytic RNA moiety and 10 different protein chains; POP1, POP4, POP5, POP7, RPP14, RPP21, RPP25, RPP30, RPP38 and RPP40. Within the RNase P complex, POP1, POP7 and RPP25 form the 'finger' subcomplex, POP5, RPP14, RPP40 and homodimeric RPP30 form the 'palm' subcomplex, and RPP21, POP4 and RPP38 form the 'wrist' subcomplex. All subunits of the RNase P complex interact with the catalytic RNA. Several subunits of RNase P are also part of the RNase MRP complex. RNase MRP consists of a catalytic RNA moiety and about 8 protein subunits; POP1, POP7, RPP25, RPP30, RPP38, RPP40 and possibly also POP4 and POP5. POP7 forms a heterodimer with RPP25 that binds to the P3 stem loop of the catalytic RNA.

Its subcellular location is the nucleus. It is found in the nucleolus. Component of ribonuclease P, a ribonucleoprotein complex that generates mature tRNA molecules by cleaving their 5'-ends. Also a component of the MRP ribonuclease complex, which cleaves pre-rRNA sequences. This is Ribonuclease P protein subunit p25 (Rpp25) from Rattus norvegicus (Rat).